Here is a 150-residue protein sequence, read N- to C-terminus: uncharacterized protein (150 aa).

Positions 81–90 (TTKPSCSFAQ) are enriched in polar residues. The disordered stretch occupies residues 81 to 125 (TTKPSCSFAQPVTPRTREGAGVRGHRRRRRGSLSLIPWKTSNDKQ).

This is an uncharacterized protein from Homo sapiens (Human).